The primary structure comprises 174 residues: Alpha-crystallin B chain (174 aa).

The residue at position 1 (M1) is an N-acetylmethionine. A sHSP domain is found at 55–163 (RMPSWLETGL…PERSIPITRE (109 aa)). Zn(2+) is bound by residues H82, H103, E105, and H110. The segment at 148-174 (RKQSDVPERSIPITREEKPAIAGAQRK) is disordered. The span at 149–166 (KQSDVPERSIPITREEKP) shows a compositional bias: basic and acidic residues.

Belongs to the small heat shock protein (HSP20) family. Heteromer composed of three CRYAA and one CRYAB subunits. Aggregates with homologous proteins, including the small heat shock protein HSPB1, to form large heteromeric complexes. Inter-subunit bridging via zinc ions enhances stability, which is crucial as there is no protein turn over in the lens. Lens as well as other tissues.

May contribute to the transparency and refractive index of the lens. This chain is Alpha-crystallin B chain (CRYAB), found in Anas platyrhynchos (Mallard).